The sequence spans 211 residues: MTKVLYITAHPHDDTQSYSMAVGKAFIETYKQVHPDHEVIHLDLYKEYIPEIDVDVFSGWGKLRSGKSFEELSDEEKAKVGRMNELCEQFISADKYVFVTPMWNFSFPPVLKAYIDAVAVAGKTFKYTEQGPVGLLTDKKALHIQARGGFYSEGPAAEMEMGHRYLSVIMQFFGVPSFEGLFVEGHAAVPEKAEEIKANAIARAKDLAHTF.

FMN is bound by residues 17-19 (SYS) and 102-105 (MWNF).

This sequence belongs to the azoreductase type 1 family. Homodimer. The cofactor is FMN.

It carries out the reaction 2 a quinone + NADH + H(+) = 2 a 1,4-benzosemiquinone + NAD(+). The catalysed reaction is N,N-dimethyl-1,4-phenylenediamine + anthranilate + 2 NAD(+) = 2-(4-dimethylaminophenyl)diazenylbenzoate + 2 NADH + 2 H(+). Functionally, quinone reductase that provides resistance to thiol-specific stress caused by electrophilic quinones. Its function is as follows. Also exhibits azoreductase activity. Catalyzes the reductive cleavage of the azo bond in aromatic azo compounds to the corresponding amines. The protein is FMN-dependent NADH:quinone oxidoreductase of Geobacillus kaustophilus (strain HTA426).